Consider the following 376-residue polypeptide: Neuropeptide receptor 3 (376 aa).

Residues 1–29 (MEGGRNCVMTVQQWQPEYNDMNQIRAIFS) are Extracellular-facing. The chain crosses the membrane as a helical span at residues 30–50 (LLYLLVWVGAIVGNTLVLYVL). Residues 51–66 (TFNQVSLSVRTVFVGC) lie on the Cytoplasmic side of the membrane. The helical transmembrane segment at 67–87 (LAGSDLLMCLFSLPITAISIF) threads the bilayer. Residues 88 to 89 (SR) are Extracellular-facing. Residues 90 to 110 (VWVFPAIFCKLIGVFQGGTIF) traverse the membrane as a helical segment. A disulfide bridge links C98 with C175. Residues 111–139 (VSSFTLTVIALDRCVLILRPNQEIVNFPR) lie on the Cytoplasmic side of the membrane. The helical transmembrane segment at 140–160 (AVFIVFCIWLLGYSLALPVGI) threads the bilayer. The Extracellular portion of the chain corresponds to 161-197 (YSDIAVYDEICGTFCEENWPDFNPDTGRSGIRRAYGL). Residues 198 to 218 (SVLVLQFGIPALISSICYWMI) traverse the membrane as a helical segment. Residues 219-251 (SRVMSDQLARRRGHNIRPESETKLVNRKTRANR) lie on the Cytoplasmic side of the membrane. Residues 252–272 (MMIVMVVGFVLAWMPFNAVNL) traverse the membrane as a helical segment. At 273–284 (YRDLFGISKWYS) the chain is on the extracellular side. A helical membrane pass occupies residues 285–305 (TVFALCHVCAMCSAVLNPIIY). The Cytoplasmic segment spans residues 306 to 376 (SWFNPQFRQS…NDYRAGDQLL (71 aa)).

It belongs to the G-protein coupled receptor 1 family.

It is found in the cell membrane. In terms of biological role, G-protein coupled receptor for flp-15 neuropeptides. Receptor activation assays suggest binding to predicted flp-15 peptides, GGPQGPLRF-NH2 and RGPSGPLRF-NH2. Likely involved in Gi/Go-coupled signaling pathways. This Caenorhabditis elegans protein is Neuropeptide receptor 3.